The sequence spans 885 residues: Alanine--tRNA ligase (885 aa).

Positions 574, 578, 676, and 680 each coordinate Zn(2+).

It belongs to the class-II aminoacyl-tRNA synthetase family. It depends on Zn(2+) as a cofactor.

Its subcellular location is the cytoplasm. The enzyme catalyses tRNA(Ala) + L-alanine + ATP = L-alanyl-tRNA(Ala) + AMP + diphosphate. Catalyzes the attachment of alanine to tRNA(Ala) in a two-step reaction: alanine is first activated by ATP to form Ala-AMP and then transferred to the acceptor end of tRNA(Ala). Also edits incorrectly charged Ser-tRNA(Ala) and Gly-tRNA(Ala) via its editing domain. In Syntrophobacter fumaroxidans (strain DSM 10017 / MPOB), this protein is Alanine--tRNA ligase.